The sequence spans 201 residues: Small ribosomal subunit protein uS4c (201 aa).

Residues 15–43 (LGALPGLTSKRPSPGSDLRNQSRSGKRSQ) form a disordered region. In terms of domain architecture, S4 RNA-binding spans 89–150 (MRLDNILFRL…EQRSRALIQK (62 aa)).

This sequence belongs to the universal ribosomal protein uS4 family. Part of the 30S ribosomal subunit. Contacts protein S5. The interaction surface between S4 and S5 is involved in control of translational fidelity.

The protein resides in the plastid. It is found in the chloroplast. One of the primary rRNA binding proteins, it binds directly to 16S rRNA where it nucleates assembly of the body of the 30S subunit. Its function is as follows. With S5 and S12 plays an important role in translational accuracy. The protein is Small ribosomal subunit protein uS4c (rps4) of Ceratophyllum demersum (Rigid hornwort).